Reading from the N-terminus, the 594-residue chain is MTLDKLRKKYIDFFKSKKHFEIMGKSLVPENDPTVLFNTAGMQPLIPYLLGEVHPSGDMLVNVQKCLRTGDIDEVGDLSHLTFFEMLGNWSLGAYFKEYSVKCSFEFLTSSEYLNIPKDRLYVSVFEGDQEIPRDTETAKVWESLGIPKDRIYYLSKDHNFWGPVGSKGPCGPDTEIYVDTGKIKCSINCNVTCSCGKYFEIWNNVFMQYNKDENGNYMELDRKCVDTGMGLERTIAFLQGKSSVYDTDAFMPIIKRIEFISGKIYGQKEDDDRCIRIISDHIKAACFILADSSGVFPSNLGQGYVLRRLIRRSIRYAKKLGIKSHFLADLVDSVETIYRSFYNELTEKKDFIKKELSTEEEKFFKTLFQGEQEFIKITRNLSSKTIPGDIAFKLYDTYGFPYELTEELAFEYGFDIDKSGFNEYFKKHQKTSKKGGDKVFKGGLADYTYETTKLHTATHLLHKALQLVLGDHVKQKGSNITAERLRFDFVHSKKMTDDEIKKVEDIVNLQIKNSLSVKKSIMELSEAREKGAMALFGEKYDNLVSVYEIDGFSLEVCGGPHVENTNELGTFKIQKEQSSSSGIRRIKAILIDE.

H456, H460, C558, and H562 together coordinate Zn(2+).

The protein belongs to the class-II aminoacyl-tRNA synthetase family. It depends on Zn(2+) as a cofactor.

The protein resides in the cytoplasm. It carries out the reaction tRNA(Ala) + L-alanine + ATP = L-alanyl-tRNA(Ala) + AMP + diphosphate. Its function is as follows. Catalyzes the attachment of alanine to tRNA(Ala) in a two-step reaction: alanine is first activated by ATP to form Ala-AMP and then transferred to the acceptor end of tRNA(Ala). Also edits incorrectly charged Ser-tRNA(Ala) and Gly-tRNA(Ala) via its editing domain. The polypeptide is Alanine--tRNA ligase (alaS) (Borreliella afzelii (strain PKo) (Borrelia afzelii)).